The following is a 365-amino-acid chain: 2-aminoethylphosphonate--pyruvate transaminase (365 aa).

K194 carries the post-translational modification N6-(pyridoxal phosphate)lysine.

Belongs to the class-V pyridoxal-phosphate-dependent aminotransferase family. PhnW subfamily. Homodimer. The cofactor is pyridoxal 5'-phosphate.

It catalyses the reaction (2-aminoethyl)phosphonate + pyruvate = phosphonoacetaldehyde + L-alanine. In terms of biological role, involved in phosphonate degradation. The protein is 2-aminoethylphosphonate--pyruvate transaminase of Bacillus cereus (strain AH187).